The chain runs to 412 residues: MGKQQETILIIGAGISGLATSRLLTNNGIPNIVFEASTPDRSQGFAISLQEFGYSTLLAALGDLPLSSLIRAVAPDRQIGGTGWIDQALRDNRTGELLVAPDLTTTKQTIVRANRNALRHWIADCGEDELDVRYGHKLQSIKGKLGDVTAIFENGAKYKGSLIIAADGVNSTSRSQILPDVVPETIPLIHYHGEFQLSHSAFDELIRPHSGHSNILVGVGDSFNTPLSICNITKTRVHLDWSYSRTVKGENDILYRPNVQSEEAKQIPPALLEELDALNLAEPWKTILNSESLKTHRVFHWTTRCVYITQDDARRAGEQGVIFVGDSWHAMPIFGGEGGNHALLDGVELADAIAASTASSGNGDWDSVIKNYYGGAWKRSQEAVRRSTQRFFLLHRPATEWKEISEQKKKPA.

An N-terminal signal peptide occupies residues 1–21 (MGKQQETILIIGAGISGLATS). FAD is bound by residues glutamate 35 and alanine 46. N-linked (GlcNAc...) asparagine glycosylation occurs at asparagine 92. FAD is bound at residue arginine 119. N-linked (GlcNAc...) asparagine glycosylation is found at asparagine 170 and asparagine 231. The FAD site is built by aspartate 326 and glycine 339.

It belongs to the paxM FAD-dependent monooxygenase family. FAD serves as cofactor.

The protein operates within secondary metabolite biosynthesis. FAD-dependent monooxygenase; part of the gene cluster that mediates the biosynthesis of neosartoricin B, a prenylated anthracenone that probably exhibits T-cell antiproliferative activity, suggestive of a physiological role as an immunosuppressive agent. The non-reducing polyketide synthase nscA probably synthesizes and cyclizes the decaketide backbone. The hydrolase nscB then mediates the product release through hydrolysis followed by spontaneous decarboxylation. The prenyltransferase nscD catalyzes the addition of the dimethylallyl group to the aromatic C5. The FAD-dependent monooxygenase nscC is then responsible for the stereospecific hydroxylation at C2. Neosartoricin B can be converted into two additional compounds neosartoricins C and D. Neosartoricin C is a spirocyclic compound that is cyclized through the attack of C3 hydroxyl on C14, followed by dehydration. On the other hand, neosartoricin D is a further cyclized compound in which attack of C2 on C14 in neosartoricin C results in the formation of the acetal-containing dioxabicyclo-octanone ring. Both of these compounds are novel and possibly represent related metabolites of the gene cluster. The sequence is that of FAD-dependent monooxygenase nscC from Trichophyton tonsurans (strain CBS 112818) (Scalp ringworm fungus).